A 138-amino-acid polypeptide reads, in one-letter code: MRTLWIVAVLLLGVEGSLVQFETLIMKIAGRSGLLWYSAYGCYCGWGGHGLPQDATDRCCFVHDCCYGKATDCNPKTVSYTYSEENGEIICGGDDPCGTQICECDKAAAICFRDNIPSYDNKYWLFPPKNCREEPEPC.

An N-terminal signal peptide occupies residues 1 to 16 (MRTLWIVAVLLLGVEG). 7 disulfide bridges follow: C42–C131, C44–C60, C59–C111, C65–C138, C66–C104, C73–C97, and C91–C102. Positions 43, 45, and 47 each coordinate Ca(2+). H63 is an active-site residue. A Ca(2+)-binding site is contributed by D64. D105 is a catalytic residue.

Belongs to the phospholipase A2 family. Group II subfamily. D49 sub-subfamily. In terms of assembly, homodimer. It depends on Ca(2+) as a cofactor. Expressed by the venom gland.

The protein localises to the secreted. It catalyses the reaction a 1,2-diacyl-sn-glycero-3-phosphocholine + H2O = a 1-acyl-sn-glycero-3-phosphocholine + a fatty acid + H(+). In terms of biological role, PLA2 catalyzes the calcium-dependent hydrolysis of the 2-acyl groups in 3-sn-phosphoglycerides. The sequence is that of Acidic phospholipase A2 from Crotalus atrox (Western diamondback rattlesnake).